A 1993-amino-acid chain; its full sequence is [F-actin]-monooxygenase MICAL3 (1993 aa).

The tract at residues 2–494 (EERKQETTNQ…RHLYDSGETK (493 aa)) is monooxygenase domain. Residues Cys97, 116–118 (EKR), 123–125 (RNN), Phe183, Tyr298, and Asp398 each bind FAD. The region spanning 518-624 (VARSSKLLGW…YLTQFYEMFK (107 aa)) is the Calponin-homology (CH) domain. Ser649 carries the phosphoserine modification. The disordered stretch occupies residues 658–704 (GQTISRKRSPKDKKEKDSDGAGKRRKTSQSEEEEPPRSYKGERPTLV). A compositionally biased stretch (basic and acidic residues) spans 669-679 (DKKEKDSDGAG). A phosphoserine mark is found at Ser685 and Ser687. The region spanning 762–824 (DTCYFCQKRV…KPHYCYRLSG (63 aa)) is the LIM zinc-binding domain. Residues Cys764, Cys767, His785, Cys788, Cys791, Cys794, Cys814, and His817 each contribute to the Zn(2+) site. The segment at 854–886 (NGLASVAASSAERSPGTSMNGLEEPSIAKRLRG) is disordered. Residues 860-873 (AASSAERSPGTSMN) show a composition bias toward polar residues. At Thr887 the chain carries Phosphothreonine. Disordered stretches follow at residues 905–1023 (ELEE…RLQQ), 1039–1309 (WTHI…LSGP), 1332–1546 (IRRS…FFTP), and 1559–1837 (KENG…EELK). Residues 938-951 (SEMEEEEEEDDEDD) show a composition bias toward acidic residues. The segment covering 975 to 988 (GRSEEELEASKNFE) has biased composition (basic and acidic residues). Ser977 carries the post-translational modification Phosphoserine. Over residues 989–1014 (PEEEEEEEEYEEEDEEYEEEEEEESS) the composition is skewed to acidic residues. The span at 1039-1051 (WTHIREREAEERM) shows a compositional bias: basic and acidic residues. Residues 1065–1090 (DEDDLEEDADSEPAETEGEAAEDGDP) show a composition bias toward acidic residues. The span at 1111–1148 (EAEHRLQSQAKVKAELELRVSENEEEKPSDAPKQEERG) shows a compositional bias: basic and acidic residues. Phosphoserine is present on residues Ser1131 and Ser1187. The span at 1199 to 1212 (LREKPKAEVPEEQK) shows a compositional bias: basic and acidic residues. The segment covering 1230–1239 (SPTSPTSLQP) has biased composition (polar residues). Pro residues predominate over residues 1245 to 1255 (PPTPPTPPPTQ). Residues 1257–1275 (PICSQPQPSSDASIPSPTK) are compositionally biased toward polar residues. Position 1272 is a phosphoserine (Ser1272). At Thr1274 the chain carries Phosphothreonine. Residues Ser1276 and Ser1335 each carry the phosphoserine modification. Thr1339 carries the phosphothreonine modification. Phosphoserine occurs at positions 1369 and 1382. Over residues 1405–1420 (PSDKELRSSQEERRDL) the composition is skewed to basic and acidic residues. Residues 1421-1433 (SSSSGLGLHDSSS) are compositionally biased toward low complexity. A Phosphoserine modification is found at Ser1431. Polar residues predominate over residues 1434 to 1452 (NMKTLGSQSFNTSDSTMLT). A Phosphothreonine modification is found at Thr1452. The segment covering 1454–1465 (PSSPPPPPPPNE) has biased composition (pro residues). Over residues 1516–1530 (SVDEIPFADDVEDTY) the composition is skewed to acidic residues. The span at 1584–1600 (EAKELAEERMRAREKSV) shows a compositional bias: basic and acidic residues. Positions 1623–1633 (SSRSHTAQSQG) are enriched in polar residues. Ser1640 bears the Phosphoserine mark. Residues 1665-1685 (SPPSDSGGPDGSVTSSEGSSG) are compositionally biased toward low complexity. Residues 1686 to 1704 (KSKKRSSLFSPRRNKKEKK) show a composition bias toward basic residues. A phosphoserine mark is found at Ser1692 and Ser1695. Polar residues predominate over residues 1754–1763 (TPSSGATVDS). The span at 1795–1811 (ILERSSQKSKREPRTYT) shows a compositional bias: basic and acidic residues. The stretch at 1817-1983 (AKLTRRVQKA…EEDKDLEAAM (167 aa)) forms a coiled coil. Over residues 1819 to 1830 (LTRRVQKAARRQ) the composition is skewed to basic residues. The region spanning 1832 to 1981 (KQEELKRLHR…EKEEDKDLEA (150 aa)) is the bMERB domain. Position 1903 is a phosphoserine (Ser1903).

It belongs to the Mical family. As to quaternary structure, interacts with RAB1B, RAB8A, RAB10, RAB13 and RAB15 (in their GTP-bound forms); binding to RAB1B is of low affinity compared to other Rab proteins; at least in case of RAB8A can bind 2 molecules of RAB8A simultaneously through a high and a low affinity binding site, respectively. Interacts with ERC1 and RAB8A; may bridge ERC1 with RAB8A. Interacts with KIF23 and ERC1; enhances the interaction between KIF23 and ERC1. Interacts with NINL. The cofactor is FAD.

It is found in the cytoplasm. It localises to the cell cortex. The protein resides in the cytoskeleton. Its subcellular location is the nucleus. The protein localises to the midbody. It is found in the spindle. It localises to the cilium basal body. The enzyme catalyses L-methionyl-[F-actin] + NADPH + O2 + H(+) = L-methionyl-(R)-S-oxide-[F-actin] + NADP(+) + H2O. Monooxygenase that promotes depolymerization of F-actin by mediating oxidation of specific methionine residues on actin to form methionine-sulfoxide, resulting in actin filament disassembly and preventing repolymerization. In the absence of actin, it also functions as a NADPH oxidase producing H(2)O(2). Seems to act as Rab effector protein and play a role in vesicle trafficking. Involved in exocytic vesicles tethering and fusion: the monooxygenase activity is required for this process and implicates RAB8A associated with exocytotic vesicles. Required for cytokinesis. Contributes to stabilization and/or maturation of the intercellular bridge independently of its monooxygenase activity. Promotes recruitment of Rab8 and ERC1 to the intercellular bridge, and together these proteins are proposed to function in timely abscission. The protein is [F-actin]-monooxygenase MICAL3 (Mical3) of Mus musculus (Mouse).